Here is a 163-residue protein sequence, read N- to C-terminus: Sperm acrosome membrane-associated protein 3 (163 aa).

The first 35 residues, 1–35 (MEAGSWAPRRWPRPPGIVLLALASVLSSLLSSGQA), serve as a signal peptide directing secretion. In terms of domain architecture, C-type lysozyme spans 36–163 (RVYSRCELAR…LSDWVDGCEL (128 aa)). 4 cysteine pairs are disulfide-bonded: Cys-41/Cys-161, Cys-65/Cys-149, Cys-99/Cys-114, and Cys-110/Cys-128.

Belongs to the glycosyl hydrolase 22 family. Interacts with ASTL.

It localises to the secreted. Its function is as follows. Sperm surface membrane protein that may be involved in sperm-egg plasma membrane adhesion and fusion during fertilization. It could be a potential receptor for the egg oligosaccharide residue N-acetylglucosamine, which is present in the extracellular matrix over the egg plasma membrane. The processed form has no detectable bacteriolytic activity in vitro. The protein is Sperm acrosome membrane-associated protein 3 (SPACA3) of Bos taurus (Bovine).